The sequence spans 595 residues: Protein alan shepard (595 aa).

Residues 1–12 are compositionally biased toward pro residues; the sequence is MHPRYSPAPPPH. Residues 1–82 are disordered; it reads MHPRYSPAPP…ASVAAAPPTP (82 aa). Tyr5 bears the Phosphotyrosine mark. A compositionally biased stretch (low complexity) spans 13–31; that stretch reads QQQQQQQQQPMGGPHQQQS. The segment covering 32–43 has biased composition (gly residues); the sequence is AGGGPGHGGGAS. Positions 50–68 are enriched in polar residues; that stretch reads PNSQQLPPQMPRSQNYANG. Residues 69-78 show a composition bias toward low complexity; the sequence is SSSAASVAAA. A phosphotyrosine mark is found at Tyr138 and Tyr154. The disordered stretch occupies residues 184-238; sequence RVPTAASPSNTNSSSSSNTGSQSGTLSTSLSNTTNTNTTMGPNGTAQNQNQQGGE. Residues 190–238 show a composition bias toward low complexity; that stretch reads SPSNTNSSSSSNTGSQSGTLSTSLSNTTNTNTTMGPNGTAQNQNQQGGE. 2 RRM domains span residues 243–316 and 322–401; these read TNLY…MAKQ and TNLY…FADG. The segment at 569–595 is disordered; that stretch reads MTDSEQASTAASPDEAYTQYPHQAAPK.

Functionally, has a role in the perception of gravity. The polypeptide is Protein alan shepard (Drosophila virilis (Fruit fly)).